A 464-amino-acid chain; its full sequence is MVRVRFAPSPTGHLHVGGARTALFNWMFARKEGGKFILRIEDTDTERSSREYEQQILESLRWCGLDWDEGPDIGGDFGPYRQSERLEIYREYAEKLVEDKRAYYVVYDKEDPSKELFTTYEYPHEYKEKGHPVTIKFKVLPGKTSFEDLLKGYMEFDNSTLEDFIIMKSNGFPTYNFAVVVDDHLMRISHVFRGEDHLSNTPKQLMIYEAFGWEAPVFMHIPLILGSDRTPLSKRHGATSVEHFRREGILSRALMNYLALLGWRVEGDEIFTIEEKLQSFDPKDISNKGVIFDYQKLEWVNGKHMRRIDLEDLKREFIEWAKYAGKEIPSVDERYFSETLRICREKVNTLSQLYDIMYPFMNDDYEYEKDYVEKFLKREEAERVLEEAKKAFKDLNSWNMEEIEKTLRDLSEKGLASKKVVFQLIRGAVTGKLVTPGLFETIEVLGKERTLKRLERTLQFLKKT.

A 'HIGH' region motif is present at residues 8-18; that stretch reads PSPTGHLHVGG. Residues 231–235 carry the 'KMSKS' region motif; sequence PLSKR. Lys234 is an ATP binding site.

It belongs to the class-I aminoacyl-tRNA synthetase family. Glutamate--tRNA ligase type 1 subfamily. As to quaternary structure, monomer.

It localises to the cytoplasm. The catalysed reaction is tRNA(Glu) + L-glutamate + ATP = L-glutamyl-tRNA(Glu) + AMP + diphosphate. Its function is as follows. Catalyzes the attachment of glutamate to tRNA(Glu) in a two-step reaction: glutamate is first activated by ATP to form Glu-AMP and then transferred to the acceptor end of tRNA(Glu). The chain is Glutamate--tRNA ligase 1 from Thermotoga petrophila (strain ATCC BAA-488 / DSM 13995 / JCM 10881 / RKU-1).